The primary structure comprises 434 residues: Gamma-enolase (434 aa).

Serine 2 is modified (N-acetylserine). Lysine 5 bears the N6-acetyllysine mark. Threonine 26 carries the post-translational modification Phosphothreonine. Serine 40 provides a ligand contact to Mg(2+). Tyrosine 44 carries the post-translational modification Phosphotyrosine. The residue at position 60 (lysine 60) is an N6-acetyllysine; alternate. Position 60 is an N6-succinyllysine; alternate (lysine 60). N6-acetyllysine is present on lysine 64. An N6-acetyllysine; alternate modification is found at lysine 89. N6-succinyllysine; alternate is present on lysine 89. 2 residues coordinate substrate: histidine 158 and glutamate 167. N6-acetyllysine occurs at positions 193, 197, and 199. Lysine 202 is modified (N6-acetyllysine; alternate). Lysine 202 is covalently cross-linked (Glycyl lysine isopeptide (Lys-Gly) (interchain with G-Cter in SUMO2); alternate). Glutamate 210 (proton donor) is an active-site residue. 2 positions are modified to N6-acetyllysine; alternate: lysine 228 and lysine 233. The residue at position 228 (lysine 228) is an N6-succinyllysine; alternate. Lysine 233 is modified (N6-(2-hydroxyisobutyryl)lysine; alternate). Residue aspartate 245 participates in Mg(2+) binding. At lysine 256 the chain carries N6-acetyllysine. The residue at position 263 (serine 263) is a Phosphoserine. Position 287 is a phosphotyrosine (tyrosine 287). Serine 291 is subject to Phosphoserine. Residues glutamate 293 and aspartate 318 each contribute to the Mg(2+) site. Substrate is bound by residues glutamate 293 and aspartate 318. An N6-acetyllysine mark is found at lysine 335 and lysine 343. Lysine 343 acts as the Proton acceptor in catalysis. Substrate contacts are provided by residues 370–373 (SHRS) and lysine 394. Position 406 is an N6-acetyllysine (lysine 406).

It belongs to the enolase family. Mammalian enolase is composed of 3 isozyme subunits, alpha, beta and gamma, which can form homodimers or heterodimers which are cell-type and development-specific. Mg(2+) serves as cofactor. In terms of tissue distribution, the alpha/alpha homodimer is expressed in embryo and in most adult tissues. The alpha/beta heterodimer and the beta/beta homodimer are found in striated muscle, and the alpha/gamma heterodimer and the gamma/gamma homodimer in neurons.

The protein resides in the cytoplasm. The protein localises to the cell membrane. The enzyme catalyses (2R)-2-phosphoglycerate = phosphoenolpyruvate + H2O. It participates in carbohydrate degradation; glycolysis; pyruvate from D-glyceraldehyde 3-phosphate: step 4/5. In terms of biological role, has neurotrophic and neuroprotective properties on a broad spectrum of central nervous system (CNS) neurons. Binds, in a calcium-dependent manner, to cultured neocortical neurons and promotes cell survival. This chain is Gamma-enolase (ENO2), found in Homo sapiens (Human).